The chain runs to 75 residues: DNA-directed RNA polymerase subunit omega (75 aa).

This sequence belongs to the RNA polymerase subunit omega family. In terms of assembly, in cyanobacteria the RNAP catalytic core is composed of 2 alpha, 1 beta, 1 beta', 1 gamma and 1 omega subunit. When a sigma factor is associated with the core the holoenzyme is formed, which can initiate transcription.

It catalyses the reaction RNA(n) + a ribonucleoside 5'-triphosphate = RNA(n+1) + diphosphate. Promotes RNA polymerase assembly. Latches the N- and C-terminal regions of the beta' subunit thereby facilitating its interaction with the beta and alpha subunits. The polypeptide is DNA-directed RNA polymerase subunit omega (Cyanothece sp. (strain PCC 7425 / ATCC 29141)).